Here is a 389-residue protein sequence, read N- to C-terminus: MVTVEEVRKAQRAEGPATILAIGTATPANCILQSEYPDYYFRITNSEHKTELKEKFKRMCDKSMIRKRYMHLTEEILKENPNLCAYEAPSLDARQDMVVVEVPKLGKEAATKAIKEWGQPKSKITHVVFCTTSGVDMPGADYQLTKLLGLRPSVKRLMMYQQGCFAGGTVLRVAKDLAENNKGARVLVVCSEITAVTFRGPNDTHLDSLVGQALFGDGSAALIIGADPTPEIEKPIFELVSAAQTILPDSDGAIDGHLREVGLTFHLLKDVPGLISKNIEKSLVEAFKPLGISDWNSLFWIAHPGGPAILDQVESKLALKPEKLRATRHVLGEYGNMSSACVLFILDEMRRKCAEDGLKTTGEGLEWGVLFGFGPGLTVETVVLHSVGI.

The active site involves C164.

This sequence belongs to the thiolase-like superfamily. Chalcone/stilbene synthases family.

The protein localises to the cytoplasm. The enzyme catalyses (E)-4-coumaroyl-CoA + 3 malonyl-CoA + 3 H(+) = 2',4,4',6'-tetrahydroxychalcone + 3 CO2 + 4 CoA. It functions in the pathway secondary metabolite biosynthesis; flavonoid biosynthesis. Its function is as follows. Involved in the biosynthesis of prenylated phenolics natural products which contribute to the bitter taste of beer and display broad biological activities. Chalcone synthase that can use 4-coumaroyl-CoA to produce 4,2',4',6'-tetrahydroxychalcone (also termed naringenin-chalcone or chalcone) which can, under specific conditions, spontaneously isomerize into naringenin. The protein is Chalcone synthase H2 of Humulus lupulus (European hop).